The chain runs to 633 residues: MKAIKKSLTEEEYLYLDFSHQTEGCIFPLHTSVTLFLLSYCDCKIFKICLVVTKEVSRDSSLLRDDLIQDVEIQIISRQELPPIVQNCCLPAVVERSDNFCRAGLAVVLRHIIQKSYEADPLKKELLELLGFKKTCLKACAEVSQWTRLCELTIPLAIENFLRESSDQPPTIPVEILQLEKKLSEPVRVHNDDKLRRQKLKQQKADGVGPPLTKGKAKSKVHTQETSEGLDSSSKSLELKVAFSKLTVQEEPATTNREPSHIRKAKASDLPPLEHVFAEGLYFTLADIVLLPCIHHFLVIISRKFSEKLVEFPLLASWYQRIQEVPGVKTAASKCGIQFLHLPKLLTTSTEQHPNLCEVPGVEEQSDPLFIGGPRPTMAKLMEKGIEVMFSPHPCPTWTLDWNVLPAAVSPKEGKMSSDRALRKQQQLNNLVYVVTNQAKPGDRIVDFCSGGGHVGIVLAHMLPSCQVTLIENKELSLIRAKKRSDELGLSNIWFIQANMEYFTGMFNIGVALHACGVATDMVIEHCIKTRASFVTCPCCYGFIQNTSKFNFPKSEQFKKTLSYKEHMILCRFADQTAVQLPPQRRLIGKQCMCLVDLDRARAAEECGYSVQVISMEPESCSPKNNMIVGVPI.

The GST C-terminal domain maps to 130 to 332; sequence LGFKKTCLKA…QEVPGVKTAA (203 aa). A disordered region spans residues 191–233; the sequence is NDDKLRRQKLKQQKADGVGPPLTKGKAKSKVHTQETSEGLDSS. Over residues 224–233 the composition is skewed to polar residues; sequence QETSEGLDSS. S233 carries the phosphoserine modification.

Belongs to the GSTCD family. As to expression, widely expressed in cell types relevant to airway function, including airway smooth muscle cells and epithelial cells.

The protein resides in the cytoplasm. The chain is Glutathione S-transferase C-terminal domain-containing protein (GSTCD) from Homo sapiens (Human).